The sequence spans 170 residues: uncharacterized protein (170 aa).

This is an uncharacterized protein from Aquifex aeolicus (strain VF5).